Consider the following 305-residue polypeptide: Mitochondrial citrate transporter D (305 aa).

Solcar repeat units lie at residues 10 to 101, 111 to 197, and 211 to 298; these read LPFG…WGAF, QTQS…VRAQ, and RNDL…VMDF. 6 helical membrane-spanning segments follow: residues 16–36, 78–98, 118–137, 176–196, 208–228, and 270–291; these read FIAG…LDVV, SAPI…NDSW, LTGA…FELV, TLWR…QVRA, QQTR…TILN, and LYKG…LLVV.

Belongs to the mitochondrial carrier (TC 2.A.29) family.

The protein localises to the mitochondrion inner membrane. The catalysed reaction is citrate(in) + H(+)(in) = citrate(out) + H(+)(out). In terms of biological role, mitochondrial transporter that mediates citrate export from mitochondria to cytoplasm. Both ctpA, ctpB, and ctpD play important roles in citric acid transport across the mitochondrial membrane and function in a redundant manner. The polypeptide is Mitochondrial citrate transporter D (Aspergillus niger (strain ATCC 1015 / CBS 113.46 / FGSC A1144 / LSHB Ac4 / NCTC 3858a / NRRL 328 / USDA 3528.7)).